The primary structure comprises 517 residues: Forkhead box protein N4 (517 aa).

A DNA-binding region (fork-head) is located at residues 193-289; that stretch reads KPIYSYSCLI…EEMHKWKRKD (97 aa). 2 disordered regions span residues 365 to 398 and 497 to 517; these read VQPQ…LPHP and SGTS…IALL.

The protein localises to the nucleus. Functionally, transcription factor essential for neural and some non-neural tissues development, such as retina and lung respectively. Binds to an 11-bp consensus sequence containing the invariant tetranucleotide 5'-ACGC-3'. During development of the central nervous system, is required to specify the amacrine and horizontal cell fates from multipotent retinal progenitors while suppressing the alternative photoreceptor cell fates through activating DLL4-NOTCH signaling. Also acts synergistically with ASCL1/MASH1 to activate DLL4-NOTCH signaling and drive commitment of p2 progenitors to the V2b interneuron fates during spinal cord neurogenesis. In development of non-neural tissues, plays an essential role in the specification of the atrioventricular canal and is indirectly required for patterning the distal airway during lung development. The polypeptide is Forkhead box protein N4 (FOXN4) (Homo sapiens (Human)).